The chain runs to 342 residues: UDP-N-acetylenolpyruvoylglucosamine reductase (342 aa).

An FAD-binding PCMH-type domain is found at 17–192; the sequence is RFEAAARYAA…AEVTFALPVD (176 aa). R168 is an active-site residue. S242 acts as the Proton donor in catalysis. Residue E338 is part of the active site.

The protein belongs to the MurB family. FAD is required as a cofactor.

It is found in the cytoplasm. The enzyme catalyses UDP-N-acetyl-alpha-D-muramate + NADP(+) = UDP-N-acetyl-3-O-(1-carboxyvinyl)-alpha-D-glucosamine + NADPH + H(+). The protein operates within cell wall biogenesis; peptidoglycan biosynthesis. In terms of biological role, cell wall formation. The chain is UDP-N-acetylenolpyruvoylglucosamine reductase from Ralstonia nicotianae (strain ATCC BAA-1114 / GMI1000) (Ralstonia solanacearum).